The following is a 482-amino-acid chain: ATP synthase subunit beta, chloroplastic (482 aa).

G168–T175 is a binding site for ATP.

The protein belongs to the ATPase alpha/beta chains family. As to quaternary structure, F-type ATPases have 2 components, CF(1) - the catalytic core - and CF(0) - the membrane proton channel. CF(1) has five subunits: alpha(3), beta(3), gamma(1), delta(1), epsilon(1). CF(0) has four main subunits: a(1), b(1), b'(1) and c(9-12).

It is found in the plastid. Its subcellular location is the chloroplast thylakoid membrane. The catalysed reaction is ATP + H2O + 4 H(+)(in) = ADP + phosphate + 5 H(+)(out). Its function is as follows. Produces ATP from ADP in the presence of a proton gradient across the membrane. The catalytic sites are hosted primarily by the beta subunits. The polypeptide is ATP synthase subunit beta, chloroplastic (Gnetum parvifolium (Small-leaved jointfir)).